The sequence spans 449 residues: BPI fold-containing family B member 6 (449 aa).

Residues 1-18 (MLCSLSLVLCGLLAGTRA) form the signal peptide. An N-linked (GlcNAc...) asparagine glycan is attached at N115. Cysteines 138 and 172 form a disulfide.

It belongs to the BPI/LBP/Plunc superfamily. BPI/LBP family.

The protein localises to the secreted. The chain is BPI fold-containing family B member 6 (Bpifb6) from Mus musculus (Mouse).